The following is a 213-amino-acid chain: N-(5'-phosphoribosyl)anthranilate isomerase (213 aa).

It belongs to the TrpF family.

It carries out the reaction N-(5-phospho-beta-D-ribosyl)anthranilate = 1-(2-carboxyphenylamino)-1-deoxy-D-ribulose 5-phosphate. The protein operates within amino-acid biosynthesis; L-tryptophan biosynthesis; L-tryptophan from chorismate: step 3/5. The chain is N-(5'-phosphoribosyl)anthranilate isomerase from Hahella chejuensis (strain KCTC 2396).